Consider the following 330-residue polypeptide: GTPase Obg (330 aa).

In terms of domain architecture, Obg spans Met-1 to Leu-159. An OBG-type G domain is found at Ser-160–Lys-327. GTP-binding positions include Gly-166–Ser-173, Phe-191–Val-195, Asp-212–Gly-215, Asn-279–Asp-282, and Ser-308–Tyr-310. Residues Ser-173 and Thr-193 each coordinate Mg(2+).

It belongs to the TRAFAC class OBG-HflX-like GTPase superfamily. OBG GTPase family. In terms of assembly, monomer. Requires Mg(2+) as cofactor.

The protein localises to the cytoplasm. Its function is as follows. An essential GTPase which binds GTP, GDP and possibly (p)ppGpp with moderate affinity, with high nucleotide exchange rates and a fairly low GTP hydrolysis rate. Plays a role in control of the cell cycle, stress response, ribosome biogenesis and in those bacteria that undergo differentiation, in morphogenesis control. The polypeptide is GTPase Obg (Rickettsia felis (strain ATCC VR-1525 / URRWXCal2) (Rickettsia azadi)).